The following is a 249-amino-acid chain: uncharacterized protein (249 aa).

11 to 34 (IFGGRSQIGGELARRLAAGATMVL) lines the NADP(+) pocket. Serine 142 is a binding site for substrate. The Proton acceptor role is filled by tyrosine 155.

This sequence belongs to the short-chain dehydrogenases/reductases (SDR) family.

This is an uncharacterized protein from Mycobacterium tuberculosis (strain ATCC 25618 / H37Rv).